The primary structure comprises 376 residues: Acetate kinase (376 aa).

Asn-7 contributes to the Mg(2+) binding site. Lys-14 lines the ATP pocket. Arg-71 lines the substrate pocket. The active-site Proton donor/acceptor is the Asp-128. ATP is bound by residues 188 to 192 (HLGNG), 262 to 264 (DFR), and 310 to 314 (GVGEN). Residue Glu-364 participates in Mg(2+) binding.

This sequence belongs to the acetokinase family. Homodimer. Mg(2+) is required as a cofactor. The cofactor is Mn(2+).

Its subcellular location is the cytoplasm. It carries out the reaction acetate + ATP = acetyl phosphate + ADP. It functions in the pathway metabolic intermediate biosynthesis; acetyl-CoA biosynthesis; acetyl-CoA from acetate: step 1/2. In terms of biological role, catalyzes the formation of acetyl phosphate from acetate and ATP. Can also catalyze the reverse reaction. This is Acetate kinase from Mycolicibacterium smegmatis (strain ATCC 700084 / mc(2)155) (Mycobacterium smegmatis).